The chain runs to 164 residues: Zinc finger A20 and AN1 domain-containing stress-associated protein 1 (164 aa).

The A20-type zinc-finger motif lies at 16–50 (APEITLCANSCGFPGNPATQNLCQNCFLAATASTS). Residues Cys22, Cys26, Cys38, and Cys41 each coordinate Zn(2+). A compositionally biased stretch (low complexity) spans 48–58 (STSSPSSLSSP). The segment at 48-81 (STSSPSSLSSPVLDKQPPRPAAPLVEPQAPLPPP) is disordered. An AN1-type zinc finger spans residues 99 to 145 (TSAVNRCSRCRKRVGLTGFRCRCGHLFCGEHRYSDRHGCSYDYKSAA). Cys105, Cys108, Cys119, Cys121, Cys126, His129, His135, and Cys137 together coordinate Zn(2+).

Its function is as follows. May be involved in environmental stress response. This Oryza sativa subsp. indica (Rice) protein is Zinc finger A20 and AN1 domain-containing stress-associated protein 1 (SAP1).